A 347-amino-acid chain; its full sequence is FMRFamide-related peptides (347 aa).

The first 22 residues, 1-22, serve as a signal peptide directing secretion; it reads MGIALMFLLALYQMQSAIHSEI. Residues 23–102 constitute a propeptide that is removed on maturation; that stretch reads IDTPNYAGNS…RYKYDPELEA (80 aa). Residue Phe114 is modified to Phenylalanine amide. Residue Tyr146 is modified to Tyrosine amide. 8 positions are modified to phenylalanine amide: Phe157, Phe168, Phe179, Phe190, Phe201, Phe212, Phe223, and Phe232. Residues 235–240 constitute a propeptide that is removed on maturation; the sequence is SPHEEL. Phenylalanine amide is present on residues Phe250 and Phe259. The residue at position 270 (Ser270) is a Serine amide. Position 280 is a phenylalanine amide (Phe280). Positions 283–347 are excised as a propeptide; it reads SLKPAAPESK…SVEQDQFFGQ (65 aa). Positions 283-347 are disordered; it reads SLKPAAPESK…SVEQDQFFGQ (65 aa). A compositionally biased stretch (basic and acidic residues) spans 305 to 320; sequence SPVDKAMTELFKKQEL. Over residues 321–347 the composition is skewed to polar residues; the sequence is QDQQVKNGAQATTTQDGSVEQDQFFGQ.

This sequence belongs to the FARP (FMRFamide related peptide) family. This precursor includes 13 peptides that have FMRF or related sequences at their C-termini, and other putative neuropeptides.

The protein localises to the secreted. Functionally, in insects, FMRFamide and related peptides have modulatory actions at skeletal neuromuscular junctions, and peptides that are immunologically related to FMRFamide are released into the circulation from neurohemal organs. The sequence is that of FMRFamide-related peptides from Drosophila melanogaster (Fruit fly).